A 230-amino-acid polypeptide reads, in one-letter code: Protein LURP-one-related 11 (230 aa).

It belongs to the LOR family.

Might be related to the phospholipid scramblase and tubby-like superfamily of membrane tethered transcription factors. The chain is Protein LURP-one-related 11 from Arabidopsis thaliana (Mouse-ear cress).